A 388-amino-acid chain; its full sequence is uncharacterized protein (388 aa).

The protein localises to the mitochondrion. This is an uncharacterized protein from Dictyostelium citrinum (Slime mold).